The primary structure comprises 257 residues: Ribosomal RNA small subunit methyltransferase A (257 aa).

S-adenosyl-L-methionine contacts are provided by His12, Leu14, Gly39, Glu60, Asp83, and Asn101.

This sequence belongs to the class I-like SAM-binding methyltransferase superfamily. rRNA adenine N(6)-methyltransferase family. RsmA subfamily.

The protein resides in the cytoplasm. It carries out the reaction adenosine(1518)/adenosine(1519) in 16S rRNA + 4 S-adenosyl-L-methionine = N(6)-dimethyladenosine(1518)/N(6)-dimethyladenosine(1519) in 16S rRNA + 4 S-adenosyl-L-homocysteine + 4 H(+). Specifically dimethylates two adjacent adenosines (A1518 and A1519) in the loop of a conserved hairpin near the 3'-end of 16S rRNA in the 30S particle. May play a critical role in biogenesis of 30S subunits. In Nitrosomonas europaea (strain ATCC 19718 / CIP 103999 / KCTC 2705 / NBRC 14298), this protein is Ribosomal RNA small subunit methyltransferase A.